The sequence spans 160 residues: Transcription elongation factor GreA (160 aa).

A coiled-coil region spans residues 50-70 (AAREQQSFNEGRIQELEAKLS).

It belongs to the GreA/GreB family.

Necessary for efficient RNA polymerase transcription elongation past template-encoded arresting sites. The arresting sites in DNA have the property of trapping a certain fraction of elongating RNA polymerases that pass through, resulting in locked ternary complexes. Cleavage of the nascent transcript by cleavage factors such as GreA or GreB allows the resumption of elongation from the new 3'terminus. GreA releases sequences of 2 to 3 nucleotides. The chain is Transcription elongation factor GreA from Legionella pneumophila (strain Paris).